We begin with the raw amino-acid sequence, 180 residues long: Major urinary protein 5 (180 aa).

The N-terminal stretch at 1–18 (MKLLLLLCLELTLVYVHA) is a signal peptide. Cys-82 and Cys-175 are disulfide-bonded.

Belongs to the calycin superfamily. Lipocalin family.

It is found in the secreted. Major urinary proteins (Mups) bind pheromones, and thus stabilize them to allow slow release into the air from urine marks. May protect pheromones from oxidation. May also act as pheromones themselves. In this context, they play a role in the regulation of social behaviors, such as aggression, mating, pup-suckling, territory establishment and dominance. In Mus musculus (Mouse), this protein is Major urinary protein 5.